The chain runs to 291 residues: 33 kDa chaperonin (291 aa).

Disulfide bonds link Cys-235–Cys-237 and Cys-268–Cys-271.

Belongs to the HSP33 family. Under oxidizing conditions two disulfide bonds are formed involving the reactive cysteines. Under reducing conditions zinc is bound to the reactive cysteines and the protein is inactive.

Its subcellular location is the cytoplasm. Its function is as follows. Redox regulated molecular chaperone. Protects both thermally unfolding and oxidatively damaged proteins from irreversible aggregation. Plays an important role in the bacterial defense system toward oxidative stress. The protein is 33 kDa chaperonin of Streptococcus agalactiae serotype III (strain NEM316).